A 202-amino-acid chain; its full sequence is Small ribosomal subunit protein uS4c (202 aa).

The S4 RNA-binding domain maps to 90 to 153 (MRLDNVIFRL…KSEAIISKNI (64 aa)).

Belongs to the universal ribosomal protein uS4 family. In terms of assembly, part of the 30S ribosomal subunit. Contacts protein S5. The interaction surface between S4 and S5 is involved in control of translational fidelity.

It is found in the plastid. The protein resides in the chloroplast. One of the primary rRNA binding proteins, it binds directly to 16S rRNA where it nucleates assembly of the body of the 30S subunit. In terms of biological role, with S5 and S12 plays an important role in translational accuracy. This is Small ribosomal subunit protein uS4c (rps4) from Hypopterygium didictyon.